The chain runs to 263 residues: Probable esterase PIR7A (263 aa).

The active-site Acyl-ester intermediate is Ser-82. Active-site charge relay system residues include Asp-213 and His-241.

Belongs to the AB hydrolase superfamily.

In Oryza sativa subsp. indica (Rice), this protein is Probable esterase PIR7A (PIR7A).